A 320-amino-acid polypeptide reads, in one-letter code: ATP-dependent 6-phosphofructokinase (320 aa).

G12 is an ATP binding site. Position 22–26 (22–26 (RGVVR)) interacts with ADP. ATP is bound by residues 73 to 74 (RF) and 103 to 106 (GDGS). D104 contributes to the Mg(2+) binding site. A substrate-binding site is contributed by 126–128 (TID). D128 acts as the Proton acceptor in catalysis. An ADP-binding site is contributed by R155. Substrate is bound by residues R163 and 170–172 (MGR). ADP-binding positions include 186-188 (GCE), K212, and 214-216 (KKH). Substrate-binding positions include E223, R244, and 250-253 (HIQR).

This sequence belongs to the phosphofructokinase type A (PFKA) family. ATP-dependent PFK group I subfamily. Prokaryotic clade 'B1' sub-subfamily. As to quaternary structure, homotetramer. It depends on Mg(2+) as a cofactor.

The protein resides in the cytoplasm. It carries out the reaction beta-D-fructose 6-phosphate + ATP = beta-D-fructose 1,6-bisphosphate + ADP + H(+). Its pathway is carbohydrate degradation; glycolysis; D-glyceraldehyde 3-phosphate and glycerone phosphate from D-glucose: step 3/4. With respect to regulation, allosterically activated by ADP and other diphosphonucleosides, and allosterically inhibited by phosphoenolpyruvate. Its function is as follows. Catalyzes the phosphorylation of D-fructose 6-phosphate to fructose 1,6-bisphosphate by ATP, the first committing step of glycolysis. The chain is ATP-dependent 6-phosphofructokinase from Blochmanniella floridana.